A 128-amino-acid polypeptide reads, in one-letter code: ADA histone acetyltransferase complex component 2 (128 aa).

The protein localises to the cytoplasm. It localises to the nucleus. This chain is ADA histone acetyltransferase complex component 2 (AHC2), found in Saccharomyces cerevisiae (strain ATCC 204508 / S288c) (Baker's yeast).